Consider the following 1857-residue polypeptide: Fatty acid synthase subunit alpha (1857 aa).

A disordered region spans residues 96–132; sequence EEEPEATEPAPSATPAAPAAAPAAGAPPPPPSAGPAA. Over residues 102-119 the composition is skewed to low complexity; sequence TEPAPSATPAAPAAAPAA. Residues 139–214 form the Carrier domain; that stretch reads VTAVDILRTL…ASMQATFNGQ (76 aa). An O-(pantetheine 4'-phosphoryl)serine modification is found at S174. Residues 577–604 are disordered; sequence QIIPQENGHSKKGGRSAAKRNTPTRPGK. The tract at residues 648–845 is beta-ketoacyl reductase; that stretch reads KNVLMTGAGA…GAVIGWTRGT (198 aa). Positions 1092–1633 constitute a Ketosynthase family 3 (KS3) domain; it reads LQEIVIQEDL…QKGAQVIGIH (542 aa). Residues C1275, H1518, and H1559 each act as for beta-ketoacyl synthase activity in the active site. Mg(2+) contacts are provided by D1743, V1744, and E1745. Acetyl-CoA-binding positions include 1743–1745, Y1769, S1779, 1788–1798, 1812–1815, and 1842–1844; these read DVE, EAVFKSLGVSS, VDAN, and ISH. Residues S1843 and H1844 each coordinate Mg(2+).

It belongs to the thiolase-like superfamily. Fungal fatty acid synthetase subunit alpha family. [Alpha(6)beta(6)] hexamers of two multifunctional subunits (alpha and beta).

The catalysed reaction is acetyl-CoA + n malonyl-CoA + 2n NADPH + 4n H(+) = a long-chain-acyl-CoA + n CoA + n CO2 + 2n NADP(+).. The enzyme catalyses a fatty acyl-[ACP] + malonyl-[ACP] + H(+) = a 3-oxoacyl-[ACP] + holo-[ACP] + CO2. It carries out the reaction a (3R)-hydroxyacyl-[ACP] + NADP(+) = a 3-oxoacyl-[ACP] + NADPH + H(+). Fatty acid synthetase catalyzes the formation of long-chain fatty acids from acetyl-CoA, malonyl-CoA and NADPH. The alpha subunit contains domains for: acyl carrier protein, 3-oxoacyl-[acyl-carrier-protein] reductase, and 3-oxoacyl-[acyl-carrier-protein] synthase. This Penicillium patulum (Penicillium griseofulvum) protein is Fatty acid synthase subunit alpha (FAS2).